The sequence spans 339 residues: tRNA N6-adenosine threonylcarbamoyltransferase (339 aa).

Fe cation-binding residues include His-114 and His-118. Substrate contacts are provided by residues 137–141 (VVSGG), Asp-170, Gly-183, Asp-187, and Asn-277. A Fe cation-binding site is contributed by Asp-305.

It belongs to the KAE1 / TsaD family. Fe(2+) serves as cofactor.

The protein resides in the cytoplasm. The catalysed reaction is L-threonylcarbamoyladenylate + adenosine(37) in tRNA = N(6)-L-threonylcarbamoyladenosine(37) in tRNA + AMP + H(+). Its function is as follows. Required for the formation of a threonylcarbamoyl group on adenosine at position 37 (t(6)A37) in tRNAs that read codons beginning with adenine. Is involved in the transfer of the threonylcarbamoyl moiety of threonylcarbamoyl-AMP (TC-AMP) to the N6 group of A37, together with TsaE and TsaB. TsaD likely plays a direct catalytic role in this reaction. This is tRNA N6-adenosine threonylcarbamoyltransferase from Clostridium perfringens (strain SM101 / Type A).